The chain runs to 528 residues: GMP synthase [glutamine-hydrolyzing] (528 aa).

In terms of domain architecture, Glutamine amidotransferase type-1 spans 13-204 (AIVILDFGSQ…VYHICGCEPD (192 aa)). Cysteine 90 serves as the catalytic Nucleophile. Residues histidine 178 and glutamate 180 contribute to the active site. A GMPS ATP-PPase domain is found at 205 to 403 (WTTEAFIDEA…LGLPEEIVSR (199 aa)). 232–238 (SGGVDSS) is a binding site for ATP.

Homodimer.

The catalysed reaction is XMP + L-glutamine + ATP + H2O = GMP + L-glutamate + AMP + diphosphate + 2 H(+). Its pathway is purine metabolism; GMP biosynthesis; GMP from XMP (L-Gln route): step 1/1. Its function is as follows. Catalyzes the synthesis of GMP from XMP. The protein is GMP synthase [glutamine-hydrolyzing] of Synechococcus sp. (strain CC9311).